We begin with the raw amino-acid sequence, 158 residues long: Large ribosomal subunit protein bL35m (158 aa).

The protein belongs to the bacterial ribosomal protein bL35 family.

The protein resides in the mitochondrion. The polypeptide is Large ribosomal subunit protein bL35m (mrpl-35) (Caenorhabditis elegans).